The following is a 479-amino-acid chain: Ribulose bisphosphate carboxylase large chain (479 aa).

Positions Met-1–Ser-2 are excised as a propeptide. Residues Asn-123 and Thr-173 each contribute to the substrate site. Residue Lys-175 is the Proton acceptor of the active site. Position 177 (Lys-177) interacts with substrate. Mg(2+)-binding residues include Lys-201, Asp-203, and Glu-204. Residue Lys-201 is modified to N6-carboxylysine. Phosphoserine is present on Ser-208. Residue His-294 is the Proton acceptor of the active site. Positions 295 and 327 each coordinate substrate. Thr-330 is modified (phosphothreonine). Ser-379 contributes to the substrate binding site.

This sequence belongs to the RuBisCO large chain family. Type I subfamily. As to quaternary structure, heterohexadecamer of 8 large chains and 8 small chains; disulfide-linked. The disulfide link is formed within the large subunit homodimers. It depends on Mg(2+) as a cofactor. Post-translationally, the disulfide bond which can form in the large chain dimeric partners within the hexadecamer appears to be associated with oxidative stress and protein turnover.

The protein localises to the plastid. The protein resides in the chloroplast. The catalysed reaction is 2 (2R)-3-phosphoglycerate + 2 H(+) = D-ribulose 1,5-bisphosphate + CO2 + H2O. The enzyme catalyses D-ribulose 1,5-bisphosphate + O2 = 2-phosphoglycolate + (2R)-3-phosphoglycerate + 2 H(+). RuBisCO catalyzes two reactions: the carboxylation of D-ribulose 1,5-bisphosphate, the primary event in carbon dioxide fixation, as well as the oxidative fragmentation of the pentose substrate in the photorespiration process. Both reactions occur simultaneously and in competition at the same active site. In Nasturtium officinale (Watercress), this protein is Ribulose bisphosphate carboxylase large chain.